The primary structure comprises 440 residues: Alpha-methylserine aldolase (440 aa).

Lysine 255 is subject to N6-(pyridoxal phosphate)lysine.

This sequence belongs to the SHMT family. Alpha-methylserine aldolase subfamily. As to quaternary structure, homodimer. It depends on pyridoxal 5'-phosphate as a cofactor.

The catalysed reaction is 2-methyl-L-serine = formaldehyde + L-alanine. It carries out the reaction 2-ethyl-L-serine = (2S)-2-aminobutanoate + formaldehyde. Its activity is regulated as follows. In the alpha-methyl-L-serine synthesis reaction, activity is inhibited by an excess amount of formaldehyde (at a concentration greater than 4 mM). Formaldehyde release activity is reduced by the sulfhydryl reagent N-ethylmaleimide, iodoacetate amide and iodoacetic acid, but not by dithiothreitol and 2-mercaptoethanol. Activity is enhanced by 1 mM of manganese chloride. In terms of biological role, catalyzes the reversible interconversion of alpha-methyl-L-serine to L-alanine and formaldehyde. Can also catalyze the synthesis of alpha-ethyl-L-serine from L-2-aminobutyric acid and formaldehyde. Also shows low alanine racemase activity. Cannot use alpha-methyl-D-serine, L-serine, D-serine, (S)-2-amino-1-propanol, (R)-2-amino-1-propanol, (S)-alpha-hydroxymethyltyrosine, (R)-alpha-hydroxymethyltyrosine, alpha-iso-butyl-DL-serine, alpha-iso-propyl-DL-serine or alpha-benzyl-DL-serine. Cannot use D-alanine instead of L-alanine as the substrate for alpha-methyl-L-serine synthesis. Does not require tetrahydrofolate (THF) for activity. The polypeptide is Alpha-methylserine aldolase (Variovorax paradoxus).